The chain runs to 154 residues: Ribonuclease 8 (154 aa).

The first 27 residues, 1 to 27 (MAPARAGCCPLLLLLLGLRVAQIPVSA), serve as a signal peptide directing secretion. The active-site Proton acceptor is the His-42. 3 disulfides stabilise this stretch: Cys-64/Cys-118, Cys-82/Cys-133, and Cys-89/Cys-96. Substrate contacts are provided by residues 65 to 69 (KDLNT) and Lys-90. Catalysis depends on His-149, which acts as the Proton donor.

This sequence belongs to the pancreatic ribonuclease family.

The protein localises to the secreted. In terms of biological role, has a low ribonuclease activity. This is Ribonuclease 8 (RNASE8) from Miopithecus talapoin (Angolan talapoin).